A 472-amino-acid polypeptide reads, in one-letter code: 3-isopropylmalate dehydratase large subunit (472 aa).

[4Fe-4S] cluster contacts are provided by C353, C414, and C417.

This sequence belongs to the aconitase/IPM isomerase family. LeuC type 1 subfamily. Heterodimer of LeuC and LeuD. [4Fe-4S] cluster is required as a cofactor.

It catalyses the reaction (2R,3S)-3-isopropylmalate = (2S)-2-isopropylmalate. It participates in amino-acid biosynthesis; L-leucine biosynthesis; L-leucine from 3-methyl-2-oxobutanoate: step 2/4. Its function is as follows. Catalyzes the isomerization between 2-isopropylmalate and 3-isopropylmalate, via the formation of 2-isopropylmaleate. The sequence is that of 3-isopropylmalate dehydratase large subunit from Acinetobacter baumannii (strain ACICU).